The following is a 400-amino-acid chain: Proline-rich protein 5 (400 aa).

Residues 301–358 (TDSTSKLSMAGTKPPGEGERPPISNGQFPPLHNLSDSQQGLYNSQRDSPLLPAPSSSP) form a disordered region. A compositionally biased stretch (polar residues) spans 334–347 (LSDSQQGLYNSQRD). A compositionally biased stretch (low complexity) spans 348 to 358 (SPLLPAPSSSP).

It belongs to the PROTOR family. Associated component of the mechanistic target of rapamycin complex 2 (mTORC2).

Associated subunit of mTORC2, which regulates cell growth and survival in response to hormonal signals. This Xenopus laevis (African clawed frog) protein is Proline-rich protein 5 (prr5).